We begin with the raw amino-acid sequence, 289 residues long: Syntaxin-3 (289 aa).

Over 1–263 (MKDRLEQLKA…VKYQSQARKK (263 aa)) the chain is Cytoplasmic. The stretch at 32 to 111 (MDEFFSEIEE…IEEDEVRSSA (80 aa)) forms a coiled coil. A t-SNARE coiled-coil homology domain is found at 191 to 253 (LSEIEGRHKD…EKARDETKKA (63 aa)). A helical; Anchor for type IV membrane protein transmembrane segment spans residues 264–284 (LIIIIVLVVVLLGILALIIGL). Residues 285 to 289 (SVGLN) are Extracellular-facing.

It belongs to the syntaxin family. In terms of assembly, interacts with REEP6. Interacts with PRPH2 in rod and cone photoreceptors. Interacts with ROM1. Interacts with SNAP25. Interacts with VAMP2. As to quaternary structure, interacts with IPO5. Expressed in small intestine, kidney, pancreas, placenta as well as in retina. Weaker expression in lung, liver and heart. Not expressed in brain and skeletal muscle. In terms of tissue distribution, expressed only in the retina. As to expression, ubiquitously expressed.

It is found in the apical cell membrane. The protein localises to the nucleus. Functionally, potentially involved in docking of synaptic vesicles at presynaptic active zones. Apical receptor involved in membrane fusion of apical vesicles. Essential for survival of retinal photoreceetors. Its function is as follows. Functions as a regulator of gene expression. The sequence is that of Syntaxin-3 (STX3) from Homo sapiens (Human).